Here is a 256-residue protein sequence, read N- to C-terminus: Small ribosomal subunit protein uS2 (256 aa).

It belongs to the universal ribosomal protein uS2 family.

The protein is Small ribosomal subunit protein uS2 of Streptococcus equi subsp. equi (strain 4047).